We begin with the raw amino-acid sequence, 255 residues long: Acetylglutamate kinase (255 aa).

Substrate contacts are provided by residues 40–41 (GG), arginine 62, and asparagine 157.

Belongs to the acetylglutamate kinase family. ArgB subfamily.

Its subcellular location is the cytoplasm. The enzyme catalyses N-acetyl-L-glutamate + ATP = N-acetyl-L-glutamyl 5-phosphate + ADP. Its pathway is amino-acid biosynthesis; L-arginine biosynthesis; N(2)-acetyl-L-ornithine from L-glutamate: step 2/4. In terms of biological role, catalyzes the ATP-dependent phosphorylation of N-acetyl-L-glutamate. The polypeptide is Acetylglutamate kinase (Parabacteroides distasonis (strain ATCC 8503 / DSM 20701 / CIP 104284 / JCM 5825 / NCTC 11152)).